We begin with the raw amino-acid sequence, 1449 residues long: DNA polymerase III PolC-type (1449 aa).

Positions alanine 194–asparagine 231 are disordered. 2 stretches are compositionally biased toward basic and acidic residues: residues lysine 197–histidine 208 and glycine 217–asparagine 229. In terms of domain architecture, Exonuclease spans tyrosine 435–leucine 590.

The protein belongs to the DNA polymerase type-C family. PolC subfamily.

The protein resides in the cytoplasm. The catalysed reaction is DNA(n) + a 2'-deoxyribonucleoside 5'-triphosphate = DNA(n+1) + diphosphate. In terms of biological role, required for replicative DNA synthesis. This DNA polymerase also exhibits 3' to 5' exonuclease activity. This is DNA polymerase III PolC-type from Clostridium perfringens (strain 13 / Type A).